The chain runs to 171 residues: Non-specific lipid transfer protein GPI-anchored 19 (171 aa).

Positions methionine 1–alanine 18 are cleaved as a signal peptide. Disulfide bonds link cysteine 25/cysteine 66, cysteine 35/cysteine 50, cysteine 51/cysteine 93, and cysteine 64/cysteine 103. 2 N-linked (GlcNAc...) asparagine glycosylation sites follow: asparagine 72 and asparagine 82. The interval leucine 113–glutamate 149 is disordered. Low complexity predominate over residues proline 118 to serine 141. Serine 147 is lipidated: GPI-anchor amidated serine. N-linked (GlcNAc...) asparagine glycosylation is present at asparagine 148. Positions asparagine 148 to isoleucine 171 are cleaved as a propeptide — removed in mature form.

The protein belongs to the plant LTP family.

Its subcellular location is the cell membrane. Its function is as follows. Probable lipid transfer protein. The protein is Non-specific lipid transfer protein GPI-anchored 19 of Arabidopsis thaliana (Mouse-ear cress).